Reading from the N-terminus, the 203-residue chain is Dephospho-CoA kinase (203 aa).

Residues S3–A201 form the DPCK domain. G11–T16 lines the ATP pocket.

Belongs to the CoaE family.

It localises to the cytoplasm. It carries out the reaction 3'-dephospho-CoA + ATP = ADP + CoA + H(+). Its pathway is cofactor biosynthesis; coenzyme A biosynthesis; CoA from (R)-pantothenate: step 5/5. Its function is as follows. Catalyzes the phosphorylation of the 3'-hydroxyl group of dephosphocoenzyme A to form coenzyme A. This is Dephospho-CoA kinase from Burkholderia pseudomallei (strain 1710b).